A 479-amino-acid polypeptide reads, in one-letter code: Ribulose bisphosphate carboxylase large chain (479 aa).

A propeptide spanning residues 1–2 (MS) is cleaved from the precursor. N-acetylproline is present on proline 3. Lysine 14 carries the N6,N6,N6-trimethyllysine modification. Residues asparagine 123 and threonine 173 each contribute to the substrate site. The active-site Proton acceptor is lysine 175. Residue lysine 177 coordinates substrate. 3 residues coordinate Mg(2+): lysine 201, aspartate 203, and glutamate 204. N6-carboxylysine is present on lysine 201. Histidine 294 serves as the catalytic Proton acceptor. 3 residues coordinate substrate: arginine 295, histidine 327, and serine 379.

It belongs to the RuBisCO large chain family. Type I subfamily. As to quaternary structure, heterohexadecamer of 8 large chains and 8 small chains. Mg(2+) is required as a cofactor.

The protein resides in the plastid. The protein localises to the chloroplast. The enzyme catalyses 2 (2R)-3-phosphoglycerate + 2 H(+) = D-ribulose 1,5-bisphosphate + CO2 + H2O. It carries out the reaction D-ribulose 1,5-bisphosphate + O2 = 2-phosphoglycolate + (2R)-3-phosphoglycerate + 2 H(+). RuBisCO catalyzes two reactions: the carboxylation of D-ribulose 1,5-bisphosphate, the primary event in carbon dioxide fixation, as well as the oxidative fragmentation of the pentose substrate in the photorespiration process. Both reactions occur simultaneously and in competition at the same active site. The sequence is that of Ribulose bisphosphate carboxylase large chain from Jasminum nudiflorum (Winter jasmine).